The following is a 374-amino-acid chain: Isocitrate dehydrogenase [NAD] catalytic subunit 6, mitochondrial (374 aa).

The N-terminal 44 residues, 1–44 (MTMTAFLARRLIGNGSSQILGTSSSSSGPFISVSRAFFSSSTPI), are a transit peptide targeting the mitochondrion. The substrate site is built by R127, R137, R158, and D245. Mg(2+)-binding residues include D245, D269, and D273.

Belongs to the isocitrate and isopropylmalate dehydrogenases family. In terms of assembly, heterooligomer of catalytic and regulatory subunits. Mg(2+) is required as a cofactor. The cofactor is Mn(2+). In terms of tissue distribution, ubiquitous. Predominantly expressed in leaves.

Its subcellular location is the mitochondrion. The enzyme catalyses D-threo-isocitrate + NAD(+) = 2-oxoglutarate + CO2 + NADH. Catalytic subunit of the NAD(+)-dependent isocitrate dehydrogenase involved in the oxidative decarboxylation of isocitrate to 2-oxoglutarate. Performs an essential role in the oxidative function of the citric acid cycle. The chain is Isocitrate dehydrogenase [NAD] catalytic subunit 6, mitochondrial (IDH6) from Arabidopsis thaliana (Mouse-ear cress).